Reading from the N-terminus, the 102-residue chain is Glutaredoxin (102 aa).

Positions 3 to 102 constitute a Glutaredoxin domain; that stretch reads MTKTKELVSS…VPLLTEAGAV (100 aa). Cysteines 23 and 26 form a disulfide.

This sequence belongs to the glutaredoxin family. CPYC subfamily.

The protein resides in the cytoplasm. In terms of biological role, has a glutathione-disulfide oxidoreductase activity in the presence of NADPH and glutathione reductase. Reduces low molecular weight disulfides and proteins. The protein is Glutaredoxin of Ricinus communis (Castor bean).